Consider the following 312-residue polypeptide: Ribosomal protein uL3 glutamine methyltransferase (312 aa).

Belongs to the protein N5-glutamine methyltransferase family. PrmB subfamily.

It catalyses the reaction L-glutaminyl-[ribosomal protein uL3] + S-adenosyl-L-methionine = N(5)-methyl-L-glutaminyl-[ribosomal protein uL3] + S-adenosyl-L-homocysteine + H(+). Methylates large ribosomal subunit protein uL3 on a specific glutamine residue. The sequence is that of Ribosomal protein uL3 glutamine methyltransferase from Xylella fastidiosa (strain Temecula1 / ATCC 700964).